The primary structure comprises 508 residues: General transcription factor IIF subunit 1 (508 aa).

Residue Ala2 is modified to N-acetylalanine. Position 156 is a phosphothreonine (Thr156). Residues 177–446 (MQQRRLKDQD…TPSSGDVQVT (270 aa)) form a disordered region. A phosphoserine mark is found at Ser217, Ser218, Ser221, and Ser224. Residues 232–251 (SKAKKKAPVTKAGRKKKKKK) are compositionally biased toward basic residues. Composition is skewed to acidic residues over residues 255–270 (DEAFEDSDDGDFEGQE) and 303–325 (EQSESSEESEEEKPPEEDKEEEE). Thr331 is subject to Phosphothreonine. Residues 343-355 (DDSDSSEESDIDS) show a composition bias toward acidic residues. The span at 364–374 (AKKKTPPKRER) shows a compositional bias: basic residues. A phosphoserine mark is found at Ser377, Ser380, Ser381, and Ser385. Polar residues predominate over residues 378 to 388 (GGSSKGTSRPG). Thr389 carries the phosphothreonine modification. Over residues 389–406 (TPSAEAASTSSTLRAAAS) the composition is skewed to low complexity. Ser391 carries the phosphoserine modification. Residue Lys407 is modified to N6-acetyllysine. Over residues 428–443 (GPQSLSGKSTPSSGDV) the composition is skewed to polar residues. Phosphoserine is present on residues Ser431, Ser433, and Ser436. At Thr437 the chain carries Phosphothreonine. The residue at position 440 (Ser440) is a Phosphoserine.

The protein belongs to the TFIIF alpha subunit family. In terms of assembly, heterodimer of an alpha and a beta subunit. Interacts with GTF2F2, CTDP1, TAF6/TAFII80 and URI1. Interacts with GTF2B (via C-terminus and preferentially via acetylated form); this interaction prevents binding of GTF2B to GTF2F2. Part of TBP-based Pol II pre-initiation complex (PIC), in which Pol II core assembles with general transcription factors and other specific initiation factors including GTF2E1, GTF2E2, GTF2F1, GTF2F2, TCEA1, ERCC2, ERCC3, GTF2H2, GTF2H3, GTF2H4, GTF2H5, GTF2A1, GTF2A2, GTF2B and TBP; this large multi-subunit PIC complex mediates DNA unwinding and targets Pol II core to the transcription start site where the first phosphodiester bond forms. Post-translationally, phosphorylated on Ser and other residues by TAF1 and casein kinase II-like kinases.

The protein localises to the nucleus. In terms of biological role, TFIIF is a general transcription initiation factor that binds to RNA polymerase II and helps to recruit it to the initiation complex in collaboration with TFIIB. It promotes transcription elongation. This chain is General transcription factor IIF subunit 1 (Gtf2f1), found in Mus musculus (Mouse).